The primary structure comprises 406 residues: Enoyl-[acyl-carrier-protein] reductase [NADH] (406 aa).

Residues 48–53, 74–75, 111–112, and 140–141 contribute to the NAD(+) site; these read GASTGF, FE, DA, and IA. Residue Tyr-226 participates in substrate binding. Tyr-236 functions as the Proton donor in the catalytic mechanism. NAD(+)-binding positions include Lys-245 and 275–277; that span reads LVT.

It belongs to the TER reductase family. Monomer.

It catalyses the reaction a 2,3-saturated acyl-[ACP] + NAD(+) = a (2E)-enoyl-[ACP] + NADH + H(+). It participates in lipid metabolism; fatty acid biosynthesis. In terms of biological role, involved in the final reduction of the elongation cycle of fatty acid synthesis (FAS II). Catalyzes the reduction of a carbon-carbon double bond in an enoyl moiety that is covalently linked to an acyl carrier protein (ACP). This Coxiella burnetii (strain Dugway 5J108-111) protein is Enoyl-[acyl-carrier-protein] reductase [NADH].